A 403-amino-acid polypeptide reads, in one-letter code: tRNA methyltransferase 10 homolog C (403 aa).

A mitochondrion-targeting transit peptide spans 1-39 (MAAFLKMSVSVNFFRPFTRFLVPFTLHRKRNNLTILQRY). Position 84 is a phosphoserine (Ser-84). The stretch at 138-169 (TKEKVKKARQIKKEMKAAAREEAKNIKLLETT) forms a coiled coil. The SAM-dependent MTase TRM10-type domain occupies 191 to 383 (MGWKGAQAMQ…QFVPKRKHTG (193 aa)).

Belongs to the class IV-like SAM-binding methyltransferase superfamily. TRM10 family. In terms of assembly, component of mitochondrial ribonuclease P, a complex composed of TRMT10C/MRPP1, HSD17B10/MRPP2 and PRORP/MRPP3. Interacts with HSD17B10/MRPP2; forming the MRPP1-MRPP2 subcomplex of the mitochondrial ribonuclease P complex. Interacts with GRSF1.

It is found in the mitochondrion matrix. Its subcellular location is the mitochondrion nucleoid. The enzyme catalyses adenosine(9) in tRNA + S-adenosyl-L-methionine = N(1)-methyladenosine(9) in tRNA + S-adenosyl-L-homocysteine + H(+). It carries out the reaction guanosine(9) in tRNA + S-adenosyl-L-methionine = N(1)-methylguanosine(9) in tRNA + S-adenosyl-L-homocysteine + H(+). It catalyses the reaction an adenosine in mRNA + S-adenosyl-L-methionine = an N(1)-methyladenosine in mRNA + S-adenosyl-L-homocysteine + H(+). Mitochondrial tRNA N(1)-methyltransferase involved in mitochondrial tRNA maturation. Component of mitochondrial ribonuclease P, a complex composed of TRMT10C/MRPP1, HSD17B10/MRPP2 and PRORP/MRPP3, which cleaves tRNA molecules in their 5'-ends. Together with HSD17B10/MRPP2, forms a subcomplex of the mitochondrial ribonuclease P, named MRPP1-MRPP2 subcomplex, which displays functions that are independent of the ribonuclease P activity. The MRPP1-MRPP2 subcomplex catalyzes the formation of N(1)-methylguanine and N(1)-methyladenine at position 9 (m1G9 and m1A9, respectively) in tRNAs; TRMT10C/MRPP1 acting as the catalytic N(1)-methyltransferase subunit. The MRPP1-MRPP2 subcomplex also acts as a tRNA maturation platform: following 5'-end cleavage by the mitochondrial ribonuclease P complex, the MRPP1-MRPP2 subcomplex enhances the efficiency of 3'-processing catalyzed by ELAC2, retains the tRNA product after ELAC2 processing and presents the nascent tRNA to the mitochondrial CCA tRNA nucleotidyltransferase TRNT1 enzyme. In addition to tRNA N(1)-methyltransferase activity, TRMT10C/MRPP1 also acts as a mRNA N(1)-methyltransferase by mediating methylation of adenosine residues at the N(1) position of MT-ND5 mRNA. Associates with mitochondrial DNA complexes at the nucleoids to initiate RNA processing and ribosome assembly. In Homo sapiens (Human), this protein is tRNA methyltransferase 10 homolog C.